A 381-amino-acid chain; its full sequence is Actin-binding Rho-activating protein (381 aa).

Disordered regions lie at residues 39 to 156 and 179 to 207; these read ENSI…SHGS and QEEP…PEQD. Positions 69–79 are enriched in polar residues; sequence PTSHQKAQSAP. Positions 97 to 110 are enriched in basic and acidic residues; the sequence is KAPEVSHIKKKEVS. Residues serine 156 and serine 188 each carry the phosphoserine modification. Over residues 179-188 the composition is skewed to basic and acidic residues; sequence QEEPTWRSDS. 2 actin-binding regions span residues 199–299 and 300–381; these read EAEE…AERA and KRAE…TLLK. 2 interaction with actin regions span residues 240-285 and 352-381; these read SPVG…GDEG and MRAR…TLLK.

In terms of assembly, binds F-actin and ABLIM1, ABLIM2 and ABLIM3. Interaction with ABLIM2 and ABLIM3 enhances activity.

The protein localises to the cytoplasm. The protein resides in the myofibril. Its subcellular location is the sarcomere. It is found in the cytoskeleton. Acts as an activator of serum response factor (SRF)-dependent transcription possibly by inducing nuclear translocation of MKL1 or MKL2 and through a mechanism requiring Rho-actin signaling. The polypeptide is Actin-binding Rho-activating protein (Homo sapiens (Human)).